The chain runs to 878 residues: Alanine--tRNA ligase (878 aa).

Zn(2+)-binding residues include H566, H570, C668, and H672.

This sequence belongs to the class-II aminoacyl-tRNA synthetase family. It depends on Zn(2+) as a cofactor.

It is found in the cytoplasm. It carries out the reaction tRNA(Ala) + L-alanine + ATP = L-alanyl-tRNA(Ala) + AMP + diphosphate. Catalyzes the attachment of alanine to tRNA(Ala) in a two-step reaction: alanine is first activated by ATP to form Ala-AMP and then transferred to the acceptor end of tRNA(Ala). Also edits incorrectly charged Ser-tRNA(Ala) and Gly-tRNA(Ala) via its editing domain. This chain is Alanine--tRNA ligase, found in Geobacillus thermodenitrificans (strain NG80-2).